The primary structure comprises 275 residues: Glucan endo-1,3-beta-glucosidase, acidic isoform PR-N (275 aa).

The active-site Nucleophile is glutamate 196.

The protein belongs to the glycosyl hydrolase 17 family. In terms of processing, the N-terminus is blocked.

It is found in the secreted. The protein resides in the extracellular space. The catalysed reaction is Hydrolysis of (1-&gt;3)-beta-D-glucosidic linkages in (1-&gt;3)-beta-D-glucans.. Functionally, implicated in the defense of plants against pathogens. The chain is Glucan endo-1,3-beta-glucosidase, acidic isoform PR-N (PRN) from Nicotiana tabacum (Common tobacco).